Here is a 394-residue protein sequence, read N- to C-terminus: Serine palmitoyltransferase (394 aa).

Residues 111 to 112, Ser183, His211, and Thr239 contribute to the pyridoxal 5'-phosphate site; that span reads GF. At Lys242 the chain carries N6-(pyridoxal phosphate)lysine.

Belongs to the class-II pyridoxal-phosphate-dependent aminotransferase family. It depends on pyridoxal 5'-phosphate as a cofactor.

The enzyme catalyses L-serine + hexadecanoyl-CoA + H(+) = 3-oxosphinganine + CO2 + CoA. It participates in lipid metabolism; sphingolipid metabolism. Involved in de novo bacterial ceramide synthesis. Catalyzes the condensation of L-serine with palmitoyl-CoA (hexadecanoyl-CoA) to produce 3-oxosphinganine. Also capable of using alanine as substrate leading to the formation of 1-deoxysphinganine (1-deoxySa). Contributes to the levels of endogenous sphingolipids in its host. This is Serine palmitoyltransferase from Bacteroides thetaiotaomicron (strain ATCC 29148 / DSM 2079 / JCM 5827 / CCUG 10774 / NCTC 10582 / VPI-5482 / E50).